The chain runs to 962 residues: Glycine dehydrogenase (decarboxylating) (962 aa).

Position 709 is an N6-(pyridoxal phosphate)lysine (Lys709).

Belongs to the GcvP family. The glycine cleavage system is composed of four proteins: P, T, L and H. Requires pyridoxal 5'-phosphate as cofactor.

It carries out the reaction N(6)-[(R)-lipoyl]-L-lysyl-[glycine-cleavage complex H protein] + glycine + H(+) = N(6)-[(R)-S(8)-aminomethyldihydrolipoyl]-L-lysyl-[glycine-cleavage complex H protein] + CO2. In terms of biological role, the glycine cleavage system catalyzes the degradation of glycine. The P protein binds the alpha-amino group of glycine through its pyridoxal phosphate cofactor; CO(2) is released and the remaining methylamine moiety is then transferred to the lipoamide cofactor of the H protein. In Shewanella pealeana (strain ATCC 700345 / ANG-SQ1), this protein is Glycine dehydrogenase (decarboxylating).